Here is a 315-residue protein sequence, read N- to C-terminus: Coproporphyrin III ferrochelatase (315 aa).

Residues Tyr13, Arg30, 46-47 (RY), Ser54, and Tyr125 each bind Fe-coproporphyrin III. His183 and Glu264 together coordinate Fe(2+).

It belongs to the ferrochelatase family.

It is found in the cytoplasm. The catalysed reaction is Fe-coproporphyrin III + 2 H(+) = coproporphyrin III + Fe(2+). It functions in the pathway porphyrin-containing compound metabolism; protoheme biosynthesis. Involved in coproporphyrin-dependent heme b biosynthesis. Catalyzes the insertion of ferrous iron into coproporphyrin III to form Fe-coproporphyrin III. The sequence is that of Coproporphyrin III ferrochelatase from Anoxybacillus flavithermus (strain DSM 21510 / WK1).